The following is a 450-amino-acid chain: Beclin-1 (450 aa).

Residue Met1 is modified to N-acetylmethionine. 2 positions are modified to phosphoserine: Ser15 and Ser30. The interval 48-72 (TTAQAKPGETQEEETNSGEEPFIET) is disordered. Ser90, Ser93, and Ser96 each carry phosphoserine; by AMPK. A BH3 motif is present at residues 108–127 (TMENLSRRLKVTGDLFDIMS). The interaction with BCL2 and BCL2L1 isoform Bcl-X(L) stretch occupies residues 112–159 (LSRRLKVTGDLFDIMSGQTDVDHPLCEECTDTLLDQLDTQLNVTENEC). Thr119 carries the phosphothreonine; by DAPK1 modification. Positions 142-270 (DTLLDQLDTQ…LDKLKKTNVF (129 aa)) form a coiled coil. Residues 245–450 (DELKSVENQM…AWVSSQFYNK (206 aa)) are evolutionary conserved domain (ECD). Glycyl lysine isopeptide (Lys-Gly) (interchain with G-Cter in ubiquitin) cross-links involve residues Lys402 and Lys437. The interval 425–450 (WTKALKFMLTNLKWGLAWVSSQFYNK) is required for membrane-association.

It belongs to the beclin family. As to quaternary structure, a homodimeric form is proposed to exist; this metastable form readily transits to ATG14- or UVRAG-containing complexes with BECN1:UVRAG being more stable than BECN1:ATG14. Component of the PI3K (PI3KC3/PI3K-III/class III phosphatidylinositol 3-kinase) complex the core of which is composed of the catalytic subunit PIK3C3, the regulatory subunit PIK3R4 and BECN1 associating with additional regulatory/auxiliary subunits to form alternative complex forms. Alternative complex forms containing a fourth regulatory subunit in a mutually exclusive manner are PI3K complex I (PI3KC3-C1) containing ATG14, and PI3K complex II (PI3KC3-C2) containing UVRAG. PI3KC3-C1 displays a V-shaped architecture with PIK3R4 serving as a bridge between PIK3C3 and the ATG14:BECN1 subcomplex. Both, PI3KC3-C1 and PI3KC3-C2, can associate with further regulatory subunits, such as RUBCN, SH3GLB1/Bif-1 and AMBRA1. PI3KC3-C1 probably associates with PIK3CB. Forms a complex with PPP2CA and AMBRA1; AMBRA1 and BECN1 components of the complex regulate MYC stability via different pathways. Component of the complex, at least composed of LRPPRC, BECN1 and BCL2; the interactions prevent BECN1 from forming an autophagy-inducing complex with PIK3C3. Interacts with AMBRA1, GOPC, GRID2. Interacts with BCL2 and BCL2L1 isoform Bcl-X(L); the interaction inhibits BECN1 function in promoting autophagy by interfering with the formation of the PI3K complex. Interacts with cytosolic HMGB1; inhibits the interaction of BECN1 and BCL2 leading to promotion of autophagy. Interacts with USP10, USP13, VMP1, DAPK1, RAB39A. Interacts with the poly-Gln domain of ATXN3; the interaction causes deubiquitination at Lys-402 and stabilizes BECN1. Interacts with SLAMF1. Interacts with TRIM5; the interaction causes activation of BECN1 by causing its dissociation from its inhibitors BCL2 and TAB2. Interacts with active ULK1 (phosphorylated on 'Ser-317') and MEFV simultaneously. Interacts with WDR81 and WDR91; negatively regulates the PI3 kinase/PI3K activity associated with endosomal membranes. Interacts with LAPTM4B; competes with EGFR for LAPTM4B binding; regulates EGFR activity. Interacts with TRIM50. Interacts with TRIM16. Interacts with ATG14; this interaction is increased in the absence of TMEM39A. Interacts with WASHC1; preventing interaction with AMBRA1 and the DCX(AMBRA1) complex and subsequent ubiquitination. Interacts with TRIM17. Interacts with BCL2L10/BCL-B (via BH1 domain). Interacts with SH3BGRL. Interacts with IRGM; enhancing BECN1-interacting partners and influencing the composition of the BECN1 complex. Interacts with ARMC3. Interacts with LRPPRC. (Microbial infection) Interacts with human cytomegalovirus/HHV-5 protein TRS1. In terms of assembly, (Microbial infection) Interacts with murine gammaherpesvirus 68 M11. As to quaternary structure, (Microbial infection) Interacts with herpes simplex virus 1 (HHV-1) protein ICP34.5; this interaction antagonizes the host autophagy response. (Microbial infection) Interacts with Epstein-Barr virus protein BHRF1; this interaction inhibits BECN1-mediated autophagy induction. In terms of processing, phosphorylation at Thr-119 by DAPK1 reduces its interaction with BCL2 and BCL2L1 and promotes induction of autophagy. In response to autophagic stimuli, phosphorylated at serine residues by AMPK in an ATG14-dependent manner, and this phosphorylation is critical for maximally efficient autophagy. Post-translationally, polyubiquitinated by NEDD4, both with 'Lys-11'- and 'Lys-63'-linkages. 'Lys-11'-linked polyubiquitination leads to degradation and is enhanced when the stabilizing interaction partner VPS34 is depleted. Deubiquitinated by USP10 and USP13, leading to stabilize the PIK3C3/VPS34-containing complexes. Polyubiquitinated at Lys-402 with 'Lys-48'-linkages. 'Lys-48'-linked polyubiquitination of Lys-402 leads to degradation. Deubiquitinated by ATXN3, leading to stabilization. Ubiquitinated at Lys-437 via 'Lys-63'-linkage by the DCX(AMBRA1) complex, thereby increasing the association between BECN1 and PIK3C3 to promote PIK3C3 activity. 'Lys-48'-linked ubiquitination by RNF216 leads to proteasomal degradation and autophagy inhibition. Proteolytically processed by caspases including CASP8 and CASP3; the C-terminal fragments lack autophagy-inducing capacity and are proposed to induce apoptosis. Thus the cleavage is proposed to be an determinant to switch from autophagy to apoptosis pathways affecting cellular homeostasis including viral infections and survival of tumor cells. As to expression, ubiquitous.

The protein resides in the cytoplasm. Its subcellular location is the golgi apparatus. It localises to the trans-Golgi network membrane. The protein localises to the endosome membrane. It is found in the endoplasmic reticulum membrane. The protein resides in the mitochondrion membrane. Its subcellular location is the endosome. It localises to the cytoplasmic vesicle. The protein localises to the autophagosome. It is found in the mitochondrion. The protein resides in the nucleus. Its function is as follows. Plays a central role in autophagy. Acts as a core subunit of the PI3K complex that mediates formation of phosphatidylinositol 3-phosphate; different complex forms are believed to play a role in multiple membrane trafficking pathways: PI3KC3-C1 is involved in initiation of autophagosomes and PI3KC3-C2 in maturation of autophagosomes and endocytosis. Involved in regulation of degradative endocytic trafficking and required for the abscission step in cytokinesis, probably in the context of PI3KC3-C2. Essential for the formation of PI3KC3-C2 but not PI3KC3-C1 PI3K complex forms. Involved in endocytosis. May play a role in antiviral host defense. Beclin-1-C 35 kDa localized to mitochondria can promote apoptosis; it induces the mitochondrial translocation of BAX and the release of proapoptotic factors. Functionally, (Microbial infection) Protects against infection by a neurovirulent strain of Sindbis virus. The protein is Beclin-1 (BECN1) of Homo sapiens (Human).